The following is a 481-amino-acid chain: UDP-N-acetylmuramate--L-alanine ligase (481 aa).

115–121 (GTHGKTT) is an ATP binding site.

Belongs to the MurCDEF family.

The protein resides in the cytoplasm. The catalysed reaction is UDP-N-acetyl-alpha-D-muramate + L-alanine + ATP = UDP-N-acetyl-alpha-D-muramoyl-L-alanine + ADP + phosphate + H(+). It functions in the pathway cell wall biogenesis; peptidoglycan biosynthesis. Functionally, cell wall formation. The polypeptide is UDP-N-acetylmuramate--L-alanine ligase (Granulibacter bethesdensis (strain ATCC BAA-1260 / CGDNIH1)).